A 123-amino-acid chain; its full sequence is Small ribosomal subunit protein uS12 (123 aa).

A 3-methylthioaspartic acid modification is found at Asp-89.

It belongs to the universal ribosomal protein uS12 family. Part of the 30S ribosomal subunit. Contacts proteins S8 and S17. May interact with IF1 in the 30S initiation complex.

With S4 and S5 plays an important role in translational accuracy. Its function is as follows. Interacts with and stabilizes bases of the 16S rRNA that are involved in tRNA selection in the A site and with the mRNA backbone. Located at the interface of the 30S and 50S subunits, it traverses the body of the 30S subunit contacting proteins on the other side and probably holding the rRNA structure together. The combined cluster of proteins S8, S12 and S17 appears to hold together the shoulder and platform of the 30S subunit. This chain is Small ribosomal subunit protein uS12, found in Granulibacter bethesdensis (strain ATCC BAA-1260 / CGDNIH1).